A 979-amino-acid chain; its full sequence is DNA ligase 4 (979 aa).

A disordered region spans residues 1–39; that stretch reads MDSDEIMPDEEHPNVPVGDEESDIDEKYPNRPRNHSPTL. Positions 320, 322, 323, 327, 389, 430, 490, 495, 512, and 514 each coordinate ATP. The active-site N6-AMP-lysine intermediate is Lys-322. A Mg(2+)-binding site is contributed by Glu-389. Residue Glu-490 coordinates Mg(2+). 2 consecutive BRCT domains span residues 721-814 and 867-965; these read PSGH…PDFL and LQES…RFQP.

Belongs to the ATP-dependent DNA ligase family. Requires Mg(2+) as cofactor.

It localises to the nucleus. The catalysed reaction is ATP + (deoxyribonucleotide)n-3'-hydroxyl + 5'-phospho-(deoxyribonucleotide)m = (deoxyribonucleotide)n+m + AMP + diphosphate.. In terms of biological role, DNA ligase involved in DNA non-homologous end joining (NHEJ); required for double-strand break (DSB) repair. The protein is DNA ligase 4 (lig4) of Aspergillus fumigatus (strain ATCC MYA-4609 / CBS 101355 / FGSC A1100 / Af293) (Neosartorya fumigata).